Reading from the N-terminus, the 257-residue chain is Ditrans,polycis-undecaprenyl-diphosphate synthase ((2E,6E)-farnesyl-diphosphate specific) (257 aa).

The active site involves Asp23. Asp23 serves as a coordination point for Mg(2+). Residues Gly24–Arg27, Trp28, Arg36, His40, and Ser68–Glu70 contribute to the substrate site. Asn71 (proton acceptor) is an active-site residue. Substrate is bound by residues Trp72, Arg74, Arg191, and Arg197–Ser199. Glu210 serves as a coordination point for Mg(2+).

This sequence belongs to the UPP synthase family. As to quaternary structure, homodimer. Requires Mg(2+) as cofactor.

The enzyme catalyses 8 isopentenyl diphosphate + (2E,6E)-farnesyl diphosphate = di-trans,octa-cis-undecaprenyl diphosphate + 8 diphosphate. Functionally, catalyzes the sequential condensation of isopentenyl diphosphate (IPP) with (2E,6E)-farnesyl diphosphate (E,E-FPP) to yield (2Z,6Z,10Z,14Z,18Z,22Z,26Z,30Z,34E,38E)-undecaprenyl diphosphate (di-trans,octa-cis-UPP). UPP is the precursor of glycosyl carrier lipid in the biosynthesis of bacterial cell wall polysaccharide components such as peptidoglycan and lipopolysaccharide. This Xanthomonas axonopodis pv. citri (strain 306) protein is Ditrans,polycis-undecaprenyl-diphosphate synthase ((2E,6E)-farnesyl-diphosphate specific).